The sequence spans 225 residues: 7-carboxy-7-deazaguanine synthase (225 aa).

Residues 14–16 and Arg-29 contribute to the substrate site; that span reads LQG. Residues 20 to 225 enclose the Radical SAM core domain; sequence HFGKSAFFIR…LQTHKWLGVL (206 aa). [4Fe-4S] cluster contacts are provided by Cys-33, Cys-37, and Cys-40. Thr-42 serves as a coordination point for Mg(2+). Residue Thr-77 coordinates substrate. Residues Gly-79 and 127-129 each bind S-adenosyl-L-methionine; that span reads SPK.

The protein belongs to the radical SAM superfamily. 7-carboxy-7-deazaguanine synthase family. As to quaternary structure, homodimer. The cofactor is [4Fe-4S] cluster. Requires S-adenosyl-L-methionine as cofactor. Mg(2+) is required as a cofactor.

It catalyses the reaction 6-carboxy-5,6,7,8-tetrahydropterin + H(+) = 7-carboxy-7-deazaguanine + NH4(+). The protein operates within purine metabolism; 7-cyano-7-deazaguanine biosynthesis. In terms of biological role, catalyzes the complex heterocyclic radical-mediated conversion of 6-carboxy-5,6,7,8-tetrahydropterin (CPH4) to 7-carboxy-7-deazaguanine (CDG), a step common to the biosynthetic pathways of all 7-deazapurine-containing compounds. The chain is 7-carboxy-7-deazaguanine synthase from Prochlorococcus marinus (strain SARG / CCMP1375 / SS120).